A 74-amino-acid polypeptide reads, in one-letter code: Capsid protein VP2 (74 aa).

The protein resides in the virion. Its function is as follows. This extremely basic protein may tightly bind to SSV1 DNA. Essential for virus function. The chain is Capsid protein VP2 (VP2) from Saccharolobus solfataricus (Sulfolobus solfataricus).